We begin with the raw amino-acid sequence, 347 residues long: Tetraacyldisaccharide 4'-kinase (347 aa).

65–72 (FVGGTGKT) is a binding site for ATP.

It belongs to the LpxK family.

The enzyme catalyses a lipid A disaccharide + ATP = a lipid IVA + ADP + H(+). The protein operates within glycolipid biosynthesis; lipid IV(A) biosynthesis; lipid IV(A) from (3R)-3-hydroxytetradecanoyl-[acyl-carrier-protein] and UDP-N-acetyl-alpha-D-glucosamine: step 6/6. Transfers the gamma-phosphate of ATP to the 4'-position of a tetraacyldisaccharide 1-phosphate intermediate (termed DS-1-P) to form tetraacyldisaccharide 1,4'-bis-phosphate (lipid IVA). This is Tetraacyldisaccharide 4'-kinase from Janthinobacterium sp. (strain Marseille) (Minibacterium massiliensis).